The sequence spans 244 residues: 7-cyano-7-deazaguanine synthase (244 aa).

An ATP-binding site is contributed by 14–24 (FSGGQDSATCL). Zn(2+)-binding residues include C202, C217, C220, and C223.

It belongs to the QueC family. The cofactor is Zn(2+).

The catalysed reaction is 7-carboxy-7-deazaguanine + NH4(+) + ATP = 7-cyano-7-deazaguanine + ADP + phosphate + H2O + H(+). The protein operates within purine metabolism; 7-cyano-7-deazaguanine biosynthesis. Catalyzes the ATP-dependent conversion of 7-carboxy-7-deazaguanine (CDG) to 7-cyano-7-deazaguanine (preQ(0)). The sequence is that of 7-cyano-7-deazaguanine synthase from Paraburkholderia phytofirmans (strain DSM 17436 / LMG 22146 / PsJN) (Burkholderia phytofirmans).